The following is a 687-amino-acid chain: E3 ubiquitin-protein ligase RNF19B (687 aa).

Residues 1-294 are required for ubiquitin ligase activity and for protection against staurosporin-induced cell death; the sequence is MRLRNDCLVR…VCGCEFCWLC (294 aa). The interval 53 to 88 is disordered; the sequence is RTRAAPEPSVPSPPPSPPPPPPPPVSVPPPPSSPGG. Positions 60 to 85 are enriched in pro residues; it reads PSVPSPPPSPPPPPPPPVSVPPPPSS. Residues 91–313 are TRIAD supradomain; that stretch reads SLIECPLCLV…LSPSGCTFWG (223 aa). 14 residues coordinate Zn(2+): C95, C98, C118, C121, C182, C187, C204, C209, C214, C217, H222, C227, C263, and C266. The RING-type 1 zinc-finger motif lies at 95–144; sequence CPLCLVRQPPEEIPELLSCRHRSCLRCLRQYLRIEICESRVNLRCPECAE. The segment at 161 to 227 adopts an IBR-type zinc-finger fold; that stretch reads TRKYEEFLLR…KHVWHPNQTC (67 aa). An RING-type 2; atypical zinc finger spans residues 263–294; sequence CPRCSAYIIKMNDGSCNHMTCSVCGCEFCWLC. The active site involves C278. Zn(2+) is bound by residues C283, C286, C291, C294, H302, and C309. The next 2 helical transmembrane spans lie at 330–350 and 391–411; these read LIGA…AMVI and VVAA…VYGV. Residues 618–662 are disordered; it reads SIRSDLESSDAQSDDVPDLASEEYDSPHLFPPSPSNALQESPPHR. The segment covering 629–641 has biased composition (acidic residues); sequence QSDDVPDLASEEY.

It belongs to the RBR family. RNF19 subfamily. As to quaternary structure, interacts with UBE2L3, UBE2L6 and UCKL1.

It localises to the cytoplasmic granule membrane. The protein resides in the endoplasmic reticulum membrane. The catalysed reaction is [E2 ubiquitin-conjugating enzyme]-S-ubiquitinyl-L-cysteine + [acceptor protein]-L-lysine = [E2 ubiquitin-conjugating enzyme]-L-cysteine + [acceptor protein]-N(6)-ubiquitinyl-L-lysine.. Its pathway is protein modification; protein ubiquitination. In terms of biological role, E3 ubiquitin-protein ligase which accepts ubiquitin from E2 ubiquitin-conjugating enzymes UBE2L3 and UBE2L6 in the form of a thioester and then directly transfers the ubiquitin to targeted substrates, such as UCKL1. Involved in the cytolytic activity of natural killer cells and cytotoxic T-cells. Protects against staurosporin-induced cell death. The polypeptide is E3 ubiquitin-protein ligase RNF19B (rnf19b) (Xenopus laevis (African clawed frog)).